The chain runs to 354 residues: tRNA N6-adenosine threonylcarbamoyltransferase (354 aa).

Fe cation contacts are provided by histidine 116 and histidine 120. Residues leucine 139–glycine 143, aspartate 172, glycine 185, and asparagine 281 contribute to the substrate site. Residue aspartate 309 coordinates Fe cation.

The protein belongs to the KAE1 / TsaD family. Fe(2+) is required as a cofactor.

Its subcellular location is the cytoplasm. The enzyme catalyses L-threonylcarbamoyladenylate + adenosine(37) in tRNA = N(6)-L-threonylcarbamoyladenosine(37) in tRNA + AMP + H(+). Functionally, required for the formation of a threonylcarbamoyl group on adenosine at position 37 (t(6)A37) in tRNAs that read codons beginning with adenine. Is involved in the transfer of the threonylcarbamoyl moiety of threonylcarbamoyl-AMP (TC-AMP) to the N6 group of A37, together with TsaE and TsaB. TsaD likely plays a direct catalytic role in this reaction. This chain is tRNA N6-adenosine threonylcarbamoyltransferase, found in Parasynechococcus marenigrum (strain WH8102).